The chain runs to 1476 residues: Glucosyltransferase-I (1476 aa).

An N-terminal signal peptide occupies residues 1-34; the sequence is MDKKVRYKLRKVKKRWVTVSVASAVMTLTTLSGG. Disordered regions lie at residues 42 to 89 and 102 to 141; these read ESKS…ISSS and PYTV…TEAD. 2 stretches are compositionally biased toward polar residues: residues 43 to 81 and 102 to 139; these read SKSQ…QTNH and PYTV…QTTE. Cell wall-binding repeat units follow at residues 159-178 and 179-199; these read LPNV…NGKV and RTNF…TGAY. A catalytic; approximate region spans residues 200–1051; that stretch reads TDTSIDTVNK…NTYFNISDNK (852 aa). Cell wall-binding repeat units lie at residues 1087 to 1106, 1107 to 1126, 1170 to 1189, 1214 to 1234, 1235 to 1254, 1279 to 1299, 1300 to 1319, 1344 to 1364, 1365 to 1384, 1409 to 1429, and 1430 to 1449; these read KNTF…NGYM, VTGA…NGLQ, SVGL…MGYQ, RNRF…DGAA, VTGS…NGVQ, RNRF…NGYA, and VTGA…NGVQ.

Belongs to the glycosyl hydrolase 70 family.

The protein localises to the secreted. It catalyses the reaction [(1-&gt;6)-alpha-D-glucosyl](n) + sucrose = [(1-&gt;6)-alpha-D-glucosyl](n+1) + D-fructose. Its function is as follows. Production of extracellular glucans, that are thought to play a key role in the development of the dental plaque because of their ability to adhere to smooth surfaces and mediate the aggregation of bacterial cells and food debris. The protein is Glucosyltransferase-I (gtfB) of Streptococcus mutans serotype c (strain ATCC 700610 / UA159).